We begin with the raw amino-acid sequence, 1089 residues long: GPI ethanolamine phosphate transferase 3, catalytic subunit (1089 aa).

The chain crosses the membrane as a helical span at residues 4–24 (ASVLLFLAWVCFLFYAGIALF). N-linked (GlcNAc...) asparagine glycosylation is present at Asn268. The next 13 membrane-spanning stretches (helical) occupy residues 457–477 (LLAA…SPGF), 482–502 (LLLT…GLLG), 510–530 (LVLL…WKAW), 541–561 (TLFP…AVFF), 575–595 (FLLG…GQLL), 668–688 (LWYG…RLWL), 701–721 (MLFV…YWAL), 747–767 (VAGL…TVLV), 830–850 (SVYS…LLLL), 857–877 (LVFL…AAGI), 944–964 (FASH…PFLC), 1014–1034 (LKYL…ASIL), and 1048–1068 (FIFE…GIAL).

The protein belongs to the PIGG/PIGN/PIGO family. PIGO subfamily. Part of the ethanolamine phosphate transferase 3 complex composed by PIGO and PIGF. PIGF is required to stabilize PIGO.

It is found in the endoplasmic reticulum membrane. The protein operates within glycolipid biosynthesis; glycosylphosphatidylinositol-anchor biosynthesis. Catalytic subunit of the ethanolamine phosphate transferase 3 complex that transfers an ethanolamine phosphate (EtNP) from a phosphatidylethanolamine (PE) to the 6-OH position of the third alpha-1,2-linked mannose of an alpha-D-Man-(1-&gt;2)-alpha-D-Man-(1-&gt;6)-2-PEtn-alpha-D-Man-(1-&gt;4)-alpha-D-GlcN-(1-&gt;6)-(1-radyl,2-acyl-sn-glycero-3-phospho)-2-acyl-inositol (also termed H6) intermediate to generate a 6-PEtn-alpha-D-Man-(1-&gt;2)-alpha-D-Man-(1-&gt;6)-2-PEtn-alpha-D-Man-(1-&gt;4)-alpha-D-GlcN-(1-&gt;6)-(1-radyl,2-acyl-sn-glycero-3-phospho)-2-acyl-inositol (also termed H7) and participates in the tenth step of the glycosylphosphatidylinositol-anchor biosynthesis. The chain is GPI ethanolamine phosphate transferase 3, catalytic subunit from Homo sapiens (Human).